Reading from the N-terminus, the 273-residue chain is 4-hydroxy-tetrahydrodipicolinate reductase (273 aa).

12–17 (GAMGRM) serves as a coordination point for NAD(+). Lys39 provides a ligand contact to NADP(+). NAD(+)-binding positions include 102 to 104 (GTT) and 126 to 129 (ASNF). His159 serves as the catalytic Proton donor/acceptor. His160 lines the (S)-2,3,4,5-tetrahydrodipicolinate pocket. The active-site Proton donor is Lys163. 169 to 170 (GT) is a binding site for (S)-2,3,4,5-tetrahydrodipicolinate.

It belongs to the DapB family. Homotetramer.

The protein localises to the cytoplasm. It catalyses the reaction (S)-2,3,4,5-tetrahydrodipicolinate + NAD(+) + H2O = (2S,4S)-4-hydroxy-2,3,4,5-tetrahydrodipicolinate + NADH + H(+). The enzyme catalyses (S)-2,3,4,5-tetrahydrodipicolinate + NADP(+) + H2O = (2S,4S)-4-hydroxy-2,3,4,5-tetrahydrodipicolinate + NADPH + H(+). It functions in the pathway amino-acid biosynthesis; L-lysine biosynthesis via DAP pathway; (S)-tetrahydrodipicolinate from L-aspartate: step 4/4. Catalyzes the conversion of 4-hydroxy-tetrahydrodipicolinate (HTPA) to tetrahydrodipicolinate. The protein is 4-hydroxy-tetrahydrodipicolinate reductase of Buchnera aphidicola subsp. Schizaphis graminum (strain Sg).